Reading from the N-terminus, the 38-residue chain is Large ribosomal subunit protein bL36 (38 aa).

Belongs to the bacterial ribosomal protein bL36 family.

The polypeptide is Large ribosomal subunit protein bL36 (Myxococcus xanthus (strain DK1622)).